Here is a 45-residue protein sequence, read N- to C-terminus: MDYKFLAGFAAGFVSSIPISVISIYFIYLRISKHVREIVNEYGRG.

Residues Phe-9–Leu-29 form a helical membrane-spanning segment.

It belongs to the polerovirus movement protein P3a family.

The protein resides in the host cell junction. It localises to the host plasmodesma. It is found in the host Golgi apparatus. Its subcellular location is the host chloroplast envelope. The protein localises to the host mitochondrion outer membrane. Functionally, together with movement protein P17, plays an essential role in virus long distance movement. The protein is P3a of Turnip yellows virus (isolate FL-1) (TuYV).